A 178-amino-acid chain; its full sequence is Protein GrpE (178 aa).

Composition is skewed to basic and acidic residues over residues 1–19 and 30–42; these read MAKH…KEEA and SPEK…ANER. The interval 1-42 is disordered; it reads MAKHKQEEHPEDVEVKEEAVETAEQAESASPEKSELELANER.

Belongs to the GrpE family. Homodimer.

The protein localises to the cytoplasm. Its function is as follows. Participates actively in the response to hyperosmotic and heat shock by preventing the aggregation of stress-denatured proteins, in association with DnaK and GrpE. It is the nucleotide exchange factor for DnaK and may function as a thermosensor. Unfolded proteins bind initially to DnaJ; upon interaction with the DnaJ-bound protein, DnaK hydrolyzes its bound ATP, resulting in the formation of a stable complex. GrpE releases ADP from DnaK; ATP binding to DnaK triggers the release of the substrate protein, thus completing the reaction cycle. Several rounds of ATP-dependent interactions between DnaJ, DnaK and GrpE are required for fully efficient folding. In Streptococcus sanguinis (strain SK36), this protein is Protein GrpE.